Reading from the N-terminus, the 431-residue chain is Keratin, type I cytoskeletal 40 (431 aa).

Residues Met-1–Glu-89 form a head region. An IF rod domain is found at Glu-89 to Leu-400. The segment at Lys-90 to Gln-124 is coil 1A. The segment at Cys-125 to Asp-135 is linker 1. The segment at Tyr-136–Glu-236 is coil 1B. Residues Gln-237 to Leu-252 are linker 12. Residues Asp-253–Glu-396 are coil 2. The interval Asp-397–Leu-431 is tail.

It belongs to the intermediate filament family. Heterotetramer of two type I and two type II keratins. As to expression, expressed in skin and scalp. Also very weakly expressed in tongue, breast, colon and small intestine. In the hair follicle, it is specifically present in the upper hair cuticle. Not present in the upper cortex (at protein level).

Functionally, may play a role in late hair differentiation. This is Keratin, type I cytoskeletal 40 (KRT40) from Homo sapiens (Human).